The primary structure comprises 125 residues: 14 kDa phosphohistidine phosphatase (125 aa).

A2 carries the post-translational modification N-acetylalanine. K21 lines the substrate pocket. H53 (proton acceptor) is an active-site residue. 94 to 96 (SMA) contributes to the substrate binding site.

Belongs to the janus family. Monomer. Expressed abundantly in heart and skeletal muscle.

Its subcellular location is the cytoplasm. It catalyses the reaction N(pros)-phospho-L-histidyl-[protein] + H2O = L-histidyl-[protein] + phosphate. The enzyme catalyses N(tele)-phospho-L-histidyl-[protein] + H2O = L-histidyl-[protein] + phosphate. Functionally, exhibits phosphohistidine phosphatase activity. The polypeptide is 14 kDa phosphohistidine phosphatase (PHPT1) (Homo sapiens (Human)).